Consider the following 131-residue polypeptide: Snaclec A8 (131 aa).

Disulfide bonds link Cys-2–Cys-13, Cys-30–Cys-129, and Cys-104–Cys-121. Positions 9 to 130 (HEGHCYKVFN…CGQPYRFTCE (122 aa)) constitute a C-type lectin domain.

It belongs to the snaclec family. In terms of assembly, heterodimer; disulfide-linked. In terms of tissue distribution, expressed by the venom gland.

The protein localises to the secreted. Interferes with one step of hemostasis (modulation of platelet aggregation, or coagulation cascade, for example). This Macrovipera lebetinus (Levantine viper) protein is Snaclec A8.